Consider the following 476-residue polypeptide: mRNA cap guanine-N(7) methyltransferase (476 aa).

Basic and acidic residues predominate over residues M1–S14. Residues M1–S146 are disordered. Residues A20–C50 show a composition bias toward polar residues. S24, S28, and S29 each carry phosphoserine. 2 stretches are compositionally biased toward basic and acidic residues: residues D54–K68 and L84–S118. S118 carries the post-translational modification Phosphoserine. Positions K126 to K128 match the Nuclear localization signal motif. Residues I129 to H145 show a composition bias toward basic and acidic residues. The mRNA cap 0 methyltransferase domain occupies S167–Q475. An mRNA-binding site is contributed by N176–N177. The S-adenosyl-L-methionine site is built by K180, G205, D227, D261, Q284, and Y289.

It belongs to the class I-like SAM-binding methyltransferase superfamily. mRNA cap 0 methyltransferase family. Interacts with importin alpha, leading to stimulate both RNA-binding and methyltransferase activity. Interaction with importin alpha and beta is required for its nuclear localization, importin beta dissociating in response to RanGTP, allowing RNMT-importin alpha to bind RNA substrates. Interacts with elongating form of polymerase II and RNGTT. Interacts with RAMAC, this interaction significantly enhances RNA-binding and cap methyltransferase activity. As to expression, widely expressed.

It is found in the nucleus. It catalyses the reaction a 5'-end (5'-triphosphoguanosine)-ribonucleoside in mRNA + S-adenosyl-L-methionine = a 5'-end (N(7)-methyl 5'-triphosphoguanosine)-ribonucleoside in mRNA + S-adenosyl-L-homocysteine. Its activity is regulated as follows. Methyltransferase activity is activated by RAMAC. In terms of biological role, catalytic subunit of the mRNA-capping methyltransferase RNMT:RAMAC complex that methylates the N7 position of the added guanosine to the 5'-cap structure of mRNAs. Binds RNA containing 5'-terminal GpppC. The polypeptide is mRNA cap guanine-N(7) methyltransferase (RNMT) (Homo sapiens (Human)).